The primary structure comprises 452 residues: Trigger factor (452 aa).

Residues 171–256 (GDRVTLAFKG…ATLIEAPQDA (86 aa)) enclose the PPIase FKBP-type domain.

It belongs to the FKBP-type PPIase family. Tig subfamily.

The protein localises to the cytoplasm. The enzyme catalyses [protein]-peptidylproline (omega=180) = [protein]-peptidylproline (omega=0). In terms of biological role, involved in protein export. Acts as a chaperone by maintaining the newly synthesized protein in an open conformation. Functions as a peptidyl-prolyl cis-trans isomerase. The chain is Trigger factor from Afipia carboxidovorans (strain ATCC 49405 / DSM 1227 / KCTC 32145 / OM5) (Oligotropha carboxidovorans).